The chain runs to 309 residues: Malate dehydrogenase (309 aa).

NAD(+)-binding positions include 9 to 14 and Asp-33; that span reads GAGFVG. Substrate is bound by residues Arg-82 and Arg-88. Residues Asn-95 and 118–120 contribute to the NAD(+) site; that span reads VNN. Substrate-binding residues include Asn-120 and Arg-151. His-175 serves as the catalytic Proton acceptor.

It belongs to the LDH/MDH superfamily. MDH type 3 family. Homotetramer (active enzyme); homodimer and homotrimer at temperatures lower than 55 degrees Celsius (inactive forms).

It catalyses the reaction (S)-malate + NAD(+) = oxaloacetate + NADH + H(+). In terms of biological role, catalyzes the reversible oxidation of malate to oxaloacetate. This is Malate dehydrogenase from Chloroflexus aurantiacus (strain ATCC 29366 / DSM 635 / J-10-fl).